A 92-amino-acid polypeptide reads, in one-letter code: Mediator-associated protein 3 (92 aa).

The 58-residue stretch at 13–70 folds into the DEK-C domain; that stretch reads KDLRRKIKKTVKKILESSNLYKITEIKAREEASLKLDLDLSQDPYKVIVKEEVENFLE.

As to quaternary structure, associated with the Mediator complex.

The protein localises to the nucleus. This chain is Mediator-associated protein 3, found in Arabidopsis thaliana (Mouse-ear cress).